A 263-amino-acid polypeptide reads, in one-letter code: Achaete-scute homolog 2 (263 aa).

Disordered stretches follow at residues 104-126 and 194-248; these read RRRR…RNER and PPSD…ELSP. Composition is skewed to low complexity over residues 110 to 121, 202 to 220, and 230 to 247; these read ATEASSSSAAVA, PSAS…SPSP, and SPRS…GELS. The 53-residue stretch at 118 to 170 folds into the bHLH domain; the sequence is AAVARRNERERNRVKLVNLGFQALRQHVPHGGANKKLSKVETLRSAVEYIRAL.

Efficient DNA binding requires dimerization with another basic helix-loop-helix (bHLH) protein. Forms heterodimers with bHLH transcription factor TCF3. May not heterodimerise with bHLH protein HAND1. As to expression, expressed in follicular T-helper (Tfh) cells.

The protein resides in the nucleus. In terms of biological role, transcription factor. Binds to E-box motifs 5'-CANNTG-3' in the regulatory elements of target genes, probably as a heterodimer with another basic helix-loop-helix (bHLH) protein such as the transcription factor TCF3. May bind both open and closed chromatin, acting as a pioneer transcription factor to allow other factors to bind and activate lineage-specific genes. Required during post-implantation development for the generation of some differentiated trophoblast cell types. Transcriptional activity of ASCL2 may be antagonised in a subset of trophoblast cells by bHLH transcription factor HAND1, perhaps by competing for dimerization with other bHLH proteins. Involved in differentiation and function of follicular T-helper (Tfh) cells, thereby playing a role in germinal center responses; probably modulates expression of genes involved in Tfh cell function, such as BCL6. May also act as a suppressor of Th1-, Th2- and Th17-cell differentiation. Induces the formation of stem cells in intestinal crypts in vitro, synergistically activating transcription of target genes, such as SOX9, together with TCF4/beta-catenin. May form a bistable transcriptional switch, controlling expression of its own gene together with Wnt/R-spondin signaling, and thereby maintaining stem cell characteristics. Modulates expression of target genes, including perhaps down-regulating EGR1/Krox24 and chemokine CXCL10/Mob-1 and up-regulating CXCR4 and CDKN1C/p57kip2, in Schwann cells. May play a role in reducing proliferation of Schwann cells, perhaps acting via modulation of expression of CDKN1C. May be dispensable for blastocyst formation and later embryonic function. May be involved in the determination of neuronal precursors. The protein is Achaete-scute homolog 2 (Ascl2) of Mus musculus (Mouse).